A 248-amino-acid chain; its full sequence is MSSQDFDVEFVDRDDREARFVVRNITPAFANGIRRAILVDVPTLSIDTVRFVENSSVMFDEQLGLRLGLVPLTTPEDYAAGEAVTLALDVEGPGTAYSGDLVSNDPEVEAADENIPIIELKDDQRLELEADAVMGHGRDHAKHQGGVAVGYRHLQRVHVVGDSPEYADDDPQMLRGVIEEDDELVPTDDFDNDLTTRYPGKEVEIEDVDGAFVFHVESDGSMPVEELVLRAVDTLVDRADELEQAVQL.

Belongs to the archaeal Rpo3/eukaryotic RPB3 RNA polymerase subunit family. Part of the RNA polymerase complex.

It is found in the cytoplasm. It carries out the reaction RNA(n) + a ribonucleoside 5'-triphosphate = RNA(n+1) + diphosphate. DNA-dependent RNA polymerase (RNAP) catalyzes the transcription of DNA into RNA using the four ribonucleoside triphosphates as substrates. The polypeptide is DNA-directed RNA polymerase subunit Rpo3 (Halobacterium salinarum (strain ATCC 29341 / DSM 671 / R1)).